The following is a 362-amino-acid chain: Adenosine deaminase (362 aa).

Residues His19 and His21 each coordinate Zn(2+). Substrate is bound by residues His21, Asp23, and Gly181. His208 contributes to the Zn(2+) binding site. The active-site Proton donor is Glu211. Position 300 (Asp300) interacts with Zn(2+).

Belongs to the metallo-dependent hydrolases superfamily. Adenosine and AMP deaminases family. Adenosine deaminase subfamily. The cofactor is Zn(2+).

It carries out the reaction adenosine + H2O + H(+) = inosine + NH4(+). The catalysed reaction is 2'-deoxyadenosine + H2O + H(+) = 2'-deoxyinosine + NH4(+). In terms of biological role, catalyzes the hydrolytic deamination of adenosine and 2-deoxyadenosine. This Mycobacterium marinum (strain ATCC BAA-535 / M) protein is Adenosine deaminase.